The chain runs to 409 residues: 3-isopropylmalate dehydrogenase 1, chloroplastic (409 aa).

The transit peptide at 1 to 37 (MAAFLQTNISLNAIKIVPGKYSSLTDHQFRAPYRIRC) directs the protein to the chloroplast. Residue Ser74 is modified to Phosphoserine. Residue 118–133 (IGGYKWDKNEKHLRPE) participates in NAD(+) binding. 3 residues coordinate substrate: Arg140, Arg150, and Arg178. Asn238 serves as a coordination point for NAD(+). Asp268 provides a ligand contact to substrate. A Mg(2+)-binding site is contributed by Asp268. NAD(+) is bound at residue Asn269. Mg(2+) contacts are provided by Asp292 and Asp296. 322–338 (EPIHGSAPDIAGQDKAN) lines the NAD(+) pocket.

This sequence belongs to the isocitrate and isopropylmalate dehydrogenases family. In terms of assembly, homodimer. Mg(2+) serves as cofactor. It depends on Mn(2+) as a cofactor. In terms of tissue distribution, highly expressed in seedlings, leaves, stems and roots and, to a lower extent, in flowers, pollen and siliques.

Its subcellular location is the plastid. The protein localises to the chloroplast stroma. It catalyses the reaction (2R,3S)-3-isopropylmalate + NAD(+) = 4-methyl-2-oxopentanoate + CO2 + NADH. Its pathway is amino-acid biosynthesis; L-leucine biosynthesis; L-leucine from 3-methyl-2-oxobutanoate: step 3/4. It functions in the pathway secondary metabolite biosynthesis. Its activity is regulated as follows. Regulated by a thiol-based redox modification; oxidation by CuCl(2) leads to a decreased activity. Involved in both glucosinolate and leucine biosynthesis; catalyzes the oxidative decarboxylation step in both leucine biosynthesis (primary metabolism) and methionine chain elongation of glucosinolates (specialized metabolism). Catalyzes the oxidation of 3-carboxy-2-hydroxy-4-methylpentanoate (3-isopropylmalate, 3-IPM) to 3-carboxy-4-methyl-2-oxopentanoate. The product decarboxylates to 4-methyl-2 oxopentanoate. Required during pollen development and involved in embryo sac development. More active on 3-isopropylmalate and NAD(+) than towards D-malate. In Arabidopsis thaliana (Mouse-ear cress), this protein is 3-isopropylmalate dehydrogenase 1, chloroplastic.